Here is a 238-residue protein sequence, read N- to C-terminus: CD63 antigen (238 aa).

Residues 1–11 (MAVEGGMKCVK) are Cytoplasmic-facing. Residues 12–32 (FLLYVLLLAFCACAVGLIAIG) traverse the membrane as a helical segment. Topologically, residues 33 to 51 (VAVQVVLKQAITHETTAGS) are extracellular. The chain crosses the membrane as a helical span at residues 52 to 72 (LLPVVIIAVGAFLFLVAFVGC). Residues 73–81 (CGACKENYC) lie on the Cytoplasmic side of the membrane. A helical membrane pass occupies residues 82 to 102 (LMITFAIFLSLIMLVEVAVAI). The Extracellular portion of the chain corresponds to 103–203 (AGYVFRDQVK…TIAIWLRKNI (101 aa)). N-linked (GlcNAc...) asparagine glycans are attached at residues asparagine 116, asparagine 130, asparagine 150, and asparagine 172. Residues 204 to 224 (LLVAAAALGIAFVEVLGIIFS) traverse the membrane as a helical segment. The Cytoplasmic segment spans residues 225 to 238 (CCLVKSIRSGYEVM). Residues 234-238 (GYEVM) carry the Lysosomal targeting motif motif.

This sequence belongs to the tetraspanin (TM4SF) family. Interacts with TIMP1 and ITGB1 and recruits TIMP1 to ITGB1. Interacts with CD9. Identified in a complex with CD9 and ITGB3. Interacts with PMEL. Interacts with KDR/VEGFR2; identified in a complex with ITGB1 and KDR/VEGFR2 and is required to recruit KDR to ITGB1 complexes. Interacts with SYT7. Palmitoylated at a low, basal level in unstimulated platelets. The level of palmitoylation increases when platelets are activated by thrombin (in vitro). As to expression, ubiquitous. Strongly expressed in kidney. Detected in spleen, bone marrow, peripheral blood mononuclear cells and macrophages.

Its subcellular location is the cell membrane. It localises to the lysosome membrane. It is found in the late endosome membrane. The protein localises to the endosome. The protein resides in the multivesicular body. Its subcellular location is the melanosome. It localises to the secreted. It is found in the extracellular exosome. The protein localises to the cell surface. In terms of biological role, functions as a cell surface receptor for TIMP1 and plays a role in the activation of cellular signaling cascades. Plays a role in the activation of ITGB1 and integrin signaling, leading to the activation of AKT, FAK/PTK2 and MAP kinases. Promotes cell survival, reorganization of the actin cytoskeleton, cell adhesion, spreading and migration, via its role in the activation of AKT and FAK/PTK2. Plays a role in VEGFA signaling via its role in regulating the internalization of KDR/VEGFR2. Plays a role in intracellular vesicular transport processes, and is required for normal trafficking of the PMEL luminal domain that is essential for the development and maturation of melanocytes. Plays a role in the adhesion of leukocytes onto endothelial cells via its role in the regulation of SELP trafficking. May play a role in mast cell degranulation in response to Ms4a2/FceRI stimulation, but not in mast cell degranulation in response to other stimuli. This Mus musculus (Mouse) protein is CD63 antigen (Cd63).